A 99-amino-acid chain; its full sequence is MGECPHLVDVRLGHRSLATGPEQSDICHTGSEARWTTTWYGSLSFSRHKYKMLADLTPGVEMSCRHWARWLTPVIPALWKAEAGGLPELRSSRPAWTTW.

In terms of assembly, interacts with TSPO, IGHM and IGHD. As to expression, expressed in the heart, kidney, liver, pancreas, small intestine, ovary, testis, prostate and thymus. Expressed in all of the cancer cell lines tested.

The protein localises to the cytoplasm. It localises to the microsome membrane. It is found in the endoplasmic reticulum membrane. Functionally, may be involved in cell survival, proliferation and progression of cancer cells. In Homo sapiens (Human), this protein is Protein MOST-1 (C8orf17).